A 417-amino-acid chain; its full sequence is Tyrosine--tRNA ligase (417 aa).

Tyr-36 lines the L-tyrosine pocket. Residues 41–50 (PTADSLHIGH) carry the 'HIGH' region motif. Positions 170 and 174 each coordinate L-tyrosine. Positions 231-235 (KFGKS) match the 'KMSKS' region motif. Position 234 (Lys-234) interacts with ATP. The S4 RNA-binding domain maps to 351–417 (TNLVELLIEA…GKKKYFMIIH (67 aa)).

Belongs to the class-I aminoacyl-tRNA synthetase family. TyrS type 1 subfamily. As to quaternary structure, homodimer.

Its subcellular location is the cytoplasm. It carries out the reaction tRNA(Tyr) + L-tyrosine + ATP = L-tyrosyl-tRNA(Tyr) + AMP + diphosphate + H(+). Catalyzes the attachment of tyrosine to tRNA(Tyr) in a two-step reaction: tyrosine is first activated by ATP to form Tyr-AMP and then transferred to the acceptor end of tRNA(Tyr). In Macrococcus caseolyticus (strain JCSC5402) (Macrococcoides caseolyticum), this protein is Tyrosine--tRNA ligase.